The chain runs to 520 residues: Probable cytosol aminopeptidase (520 aa).

Mn(2+)-binding residues include lysine 232 and aspartate 237. Residue lysine 244 is part of the active site. Mn(2+) contacts are provided by aspartate 255, aspartate 314, and glutamate 316. Residue arginine 318 is part of the active site. Residues 488 to 520 (KAKKSTAKKATTKKTTTRKTASKTKSTKSKARK) form a disordered region.

It belongs to the peptidase M17 family. Mn(2+) is required as a cofactor.

Its subcellular location is the cytoplasm. The catalysed reaction is Release of an N-terminal amino acid, Xaa-|-Yaa-, in which Xaa is preferably Leu, but may be other amino acids including Pro although not Arg or Lys, and Yaa may be Pro. Amino acid amides and methyl esters are also readily hydrolyzed, but rates on arylamides are exceedingly low.. It catalyses the reaction Release of an N-terminal amino acid, preferentially leucine, but not glutamic or aspartic acids.. In terms of biological role, presumably involved in the processing and regular turnover of intracellular proteins. Catalyzes the removal of unsubstituted N-terminal amino acids from various peptides. The protein is Probable cytosol aminopeptidase (pepA) of Metamycoplasma salivarium (Mycoplasma salivarium).